Reading from the N-terminus, the 426-residue chain is Histidine--tRNA ligase (426 aa).

The protein belongs to the class-II aminoacyl-tRNA synthetase family. In terms of assembly, homodimer.

It is found in the cytoplasm. It carries out the reaction tRNA(His) + L-histidine + ATP = L-histidyl-tRNA(His) + AMP + diphosphate + H(+). This is Histidine--tRNA ligase from Geobacillus thermodenitrificans (strain NG80-2).